The primary structure comprises 571 residues: Sulfite reductase [NADPH] hemoprotein beta-component (571 aa).

The [4Fe-4S] cluster site is built by Cys-436, Cys-442, Cys-481, and Cys-485. Siroheme is bound at residue Cys-485.

The protein belongs to the nitrite and sulfite reductase 4Fe-4S domain family. Alpha(8)-beta(8). The alpha component is a flavoprotein, the beta component is a hemoprotein. Siroheme is required as a cofactor. The cofactor is [4Fe-4S] cluster.

The enzyme catalyses hydrogen sulfide + 3 NADP(+) + 3 H2O = sulfite + 3 NADPH + 4 H(+). It functions in the pathway sulfur metabolism; hydrogen sulfide biosynthesis; hydrogen sulfide from sulfite (NADPH route): step 1/1. Functionally, component of the sulfite reductase complex that catalyzes the 6-electron reduction of sulfite to sulfide. This is one of several activities required for the biosynthesis of L-cysteine from sulfate. The polypeptide is Sulfite reductase [NADPH] hemoprotein beta-component (Anoxybacillus flavithermus (strain DSM 21510 / WK1)).